The following is a 71-amino-acid chain: uncharacterized protein (71 aa).

This is an uncharacterized protein from Autographa californica nuclear polyhedrosis virus (AcMNPV).